We begin with the raw amino-acid sequence, 1119 residues long: DNA-directed RNA polymerase subunit beta (1119 aa).

It belongs to the RNA polymerase beta chain family. In terms of assembly, the RNAP catalytic core consists of 2 alpha, 1 beta, 1 beta' and 1 omega subunit. When a sigma factor is associated with the core the holoenzyme is formed, which can initiate transcription.

The enzyme catalyses RNA(n) + a ribonucleoside 5'-triphosphate = RNA(n+1) + diphosphate. Functionally, DNA-dependent RNA polymerase catalyzes the transcription of DNA into RNA using the four ribonucleoside triphosphates as substrates. This is DNA-directed RNA polymerase subunit beta from Thermus thermophilus (strain ATCC 27634 / DSM 579 / HB8).